Reading from the N-terminus, the 794-residue chain is Solute carrier family 26 member 9 (794 aa).

The Cytoplasmic segment spans residues 1–70; that stretch reads MNKVRPRYII…WLPKYNIKGN (70 aa). Residues 71-96 traverse the membrane as a helical segment; that stretch reads LLNDALGGISAGTIQIPQGMAFALLA. Residues 97–100 are Extracellular-facing; the sequence is NLPP. Residues 101–109 traverse the membrane as a helical segment; sequence VNGLYSSFF. Topologically, residues 110–129 are cytoplasmic; that stretch reads PLVVYFFMGGIPQMVPGTFA. A helical transmembrane segment spans residues 130–142; sequence VISIIVGNVCLKL. Topologically, residues 143–160 are extracellular; that stretch reads APESHFQNVTSNGTITNI. The helical transmembrane segment at 161-189 threads the bilayer; sequence EAMNTARMHISATLACLTAIIQIALSFVQ. The Cytoplasmic segment spans residues 190–199; the sequence is FGFVAIYLSE. The helical transmembrane segment at 200-222 threads the bilayer; the sequence is SFIRGFMTAAGLQILISVLKYIF. The Extracellular portion of the chain corresponds to 223-235; the sequence is GVSIPPYSGVLAI. The segment at residues 236–244 is an intramembrane region (helical); sequence IYTFIDICK. Over 245-252 the chain is Extracellular; it reads ELPKTNVA. Residues 253–273 traverse the membrane as a helical segment; sequence SLIFALISTVLLIIVKELNMK. The Cytoplasmic segment spans residues 274-284; the sequence is FMHKIRFPIPM. The helical transmembrane segment at 285–297 threads the bilayer; the sequence is EIIIVIVATAVSG. The Extracellular segment spans residues 298–332; that stretch reads SFKLPERYHMNVVGHIPLGFPSPTVPNVTQWDEMV. A helical membrane pass occupies residues 333–356; the sequence is GTAFSLAIVGYVINLAMGRTLGAK. The Cytoplasmic segment spans residues 357 to 363; that stretch reads HGFDVDA. A helical membrane pass occupies residues 364-377; that stretch reads NQEMLALGSGNFFG. The Extracellular segment spans residues 378-388; that stretch reads SFFFIHVICCA. Residues 389–398 form a helical membrane-spanning segment; the sequence is LSVTLAVDGA. Residues 399–403 are Cytoplasmic-facing; it reads GGKSQ. Residues 404–417 form a helical membrane-spanning segment; the sequence is IASFFVMMSVMVTI. At 418–429 the chain is on the extracellular side; the sequence is LALGTYLNPLPK. A helical membrane pass occupies residues 430-455; the sequence is SVLGALIAVNLKNSLKQLSDPFYLWK. At 456–459 the chain is on the cytoplasmic side; that stretch reads KSKL. The helical transmembrane segment at 460 to 474 threads the bilayer; that stretch reads DCLVWLVSFFSTFIL. The Extracellular portion of the chain corresponds to 475–477; sequence GLP. The chain crosses the membrane as a helical span at residues 478-496; it reads YGLAVGVAFSILVVIFNTQ. Over 497–794 the chain is Cytoplasmic; that stretch reads FRNGSSLNQV…MFQTEIQTAL (298 aa). In terms of domain architecture, STAS spans 517 to 739; the sequence is VYSKVQPIDG…ITVHDAVLYA (223 aa).

The protein belongs to the SLC26A/SulP transporter (TC 2.A.53) family. Homodimer.

The protein localises to the cell membrane. Its subcellular location is the endomembrane system. The enzyme catalyses chloride(in) = chloride(out). It catalyses the reaction hydrogencarbonate(in) + chloride(out) = hydrogencarbonate(out) + chloride(in). Inhibited by ammonium and thiosulfate. In terms of biological role, ion transporter that can act both as an ion channel and anion exchanger. Mainly acts as a chloride channel, which mediate uncoupled chloride anion transport in an alternate-access mechanism where a saturable binding site is alternately exposed to either one or the other side of the membrane. Also acts as a DIDS- and thiosulfate- sensitive anion exchanger the exchange of chloride for bicarbonate ions across the cell membrane. This chain is Solute carrier family 26 member 9 (slc26a9), found in Xenopus tropicalis (Western clawed frog).